The following is a 618-amino-acid chain: Camphene synthase, chloroplastic (618 aa).

Residues 1–51 (MALLSITPLVSRSCLSSSHEIKALRRTIPTLGICRPGKSVAHSINMCLTSV) constitute a chloroplast transit peptide. 3 residues coordinate Mg(2+): Asp-369, Asp-373, and Asp-521. Positions 369–373 (DDMYD) match the DDXXD motif motif.

It belongs to the terpene synthase family. Tpsd subfamily. Requires Mg(2+) as cofactor. It depends on Mn(2+) as a cofactor. The cofactor is K(+).

Its subcellular location is the plastid. The protein resides in the chloroplast. The enzyme catalyses (2E)-geranyl diphosphate = (1S,4R)-camphene + diphosphate. It participates in terpene metabolism; oleoresin biosynthesis. Involved in defensive oleoresin formation in conifers in response to insect attack or other injury. Involved in monoterpene (C10) olefins biosynthesis. This is Camphene synthase, chloroplastic (ag6) from Abies grandis (Grand fir).